The following is a 319-amino-acid chain: Protease HtpX homolog (319 aa).

A run of 2 helical transmembrane segments spans residues 6-26 (TAMLLAFMTVLFMAVGYVIGG) and 28-48 (GGMMIALVIAAGMNFFSYWNS). A Zn(2+)-binding site is contributed by H130. E131 is a catalytic residue. H134 is a binding site for Zn(2+). A run of 2 helical transmembrane segments spans residues 145–165 (MTATLAGAISMLGNFAFFFGG) and 172–192 (PLGFIGVLIAMIVAPLAAALV). A Zn(2+)-binding site is contributed by E201. Residues 280 to 319 (EMSTGSTAPVRPDNAVRKSRSVPRTGWGRGGSEPPKGPWS) are disordered.

Belongs to the peptidase M48B family. Zn(2+) is required as a cofactor.

It is found in the cell inner membrane. In Sinorhizobium medicae (strain WSM419) (Ensifer medicae), this protein is Protease HtpX homolog.